Consider the following 633-residue polypeptide: Extracellular metalloproteinase 5 (633 aa).

The N-terminal stretch at 1-21 (MHGLLLAAAGLLSLPLHVIAH) is a signal peptide. Positions 22-245 (PQPSTNLAGR…HNVVDYVSHA (224 aa)) are excised as a propeptide. N-linked (GlcNAc...) asparagine glycosylation is present at asparagine 286. A Zn(2+)-binding site is contributed by histidine 428. Glutamate 429 is a catalytic residue. A Zn(2+)-binding site is contributed by histidine 432. N-linked (GlcNAc...) asparagine glycans are attached at residues asparagine 592 and asparagine 621.

It belongs to the peptidase M36 family. Requires Zn(2+) as cofactor.

It is found in the secreted. Its function is as follows. Secreted metalloproteinase probably acting as a virulence factor. This chain is Extracellular metalloproteinase 5 (MEP5), found in Arthroderma benhamiae (Trichophyton mentagrophytes).